Reading from the N-terminus, the 177-residue chain is dCTP deaminase, dUMP-forming (177 aa).

Residues 95-100, Asp-112, 120-122, Gln-141, Tyr-155, and Gln-162 each bind dCTP; these read RSSLGR and TLE. Catalysis depends on Glu-122, which acts as the Proton donor/acceptor.

Belongs to the dCTP deaminase family. In terms of assembly, homotrimer.

It catalyses the reaction dCTP + 2 H2O = dUMP + NH4(+) + diphosphate. Its pathway is pyrimidine metabolism; dUMP biosynthesis; dUMP from dCTP: step 1/1. Bifunctional enzyme that catalyzes both the deamination of dCTP to dUTP and the hydrolysis of dUTP to dUMP without releasing the toxic dUTP intermediate. In Hydrogenobaculum sp. (strain Y04AAS1), this protein is dCTP deaminase, dUMP-forming.